The chain runs to 581 residues: CUE domain-containing protein 3 (581 aa).

Residues 271–314 (INPGDVKSLIELFPQLSVEEAVEHLSASLGNIDAACESVITSSL) form the CUE domain. Tyrosine 386 is subject to Phosphotyrosine. Disordered stretches follow at residues 422–448 (DDTYDDLDTTGPVDSGVGDDDPEASSK) and 522–581 (GSGN…SNEK). Residues 522 to 542 (GSGNTNIGSLRQTKFKQSNYT) are compositionally biased toward polar residues. A compositionally biased stretch (basic residues) spans 552-581 (QHRPSRPSKNPSLKKKKYVRTKPKKASNEK).

In terms of assembly, component of the RQT (ribosome quality control trigger) complex.

The protein resides in the cytoplasm. Its subcellular location is the nucleus. Functionally, involved in activation of the ribosome quality control (RQC) pathway, a pathway that degrades nascent peptide chains during problematic translation. Specifically recognizes and binds RPS20/uS10 ubiquitinated by HEL2, promoting recruitment of the RQT (ribosome quality control trigger) complex on stalled ribosomes, followed by disassembly of stalled ribosomes. This Schizosaccharomyces pombe (strain 972 / ATCC 24843) (Fission yeast) protein is CUE domain-containing protein 3.